A 164-amino-acid chain; its full sequence is Transcription antitermination protein NusB (164 aa).

The interval 144–164 (KNGRGLIDHTPPRAAKTDAKS) is disordered. Residues 149 to 164 (LIDHTPPRAAKTDAKS) show a composition bias toward basic and acidic residues.

It belongs to the NusB family.

Involved in transcription antitermination. Required for transcription of ribosomal RNA (rRNA) genes. Binds specifically to the boxA antiterminator sequence of the ribosomal RNA (rrn) operons. This is Transcription antitermination protein NusB from Chlorobium phaeovibrioides (strain DSM 265 / 1930) (Prosthecochloris vibrioformis (strain DSM 265)).